The sequence spans 87 residues: Small ribosomal subunit protein bS20 (87 aa).

A disordered region spans residues 1 to 26 (MANIKSAKKRAVQSEKARKHNASRRS).

It belongs to the bacterial ribosomal protein bS20 family.

Its function is as follows. Binds directly to 16S ribosomal RNA. The protein is Small ribosomal subunit protein bS20 of Salmonella gallinarum (strain 287/91 / NCTC 13346).